A 134-amino-acid chain; its full sequence is Profilin-3 (134 aa).

A disulfide bridge links Cys-13 with Cys-118. The short motif at 84 to 100 (AVIRGKKGSGGITSKKT) is the Involved in PIP2 interaction element. Thr-114 bears the Phosphothreonine mark.

It belongs to the profilin family. In terms of assembly, occurs in many kinds of cells as a complex with monomeric actin in a 1:1 ratio. In terms of processing, phosphorylated by MAP kinases.

Its subcellular location is the cytoplasm. It localises to the cytoskeleton. Its function is as follows. Binds to actin and affects the structure of the cytoskeleton. At high concentrations, profilin prevents the polymerization of actin, whereas it enhances it at low concentrations. This Olea europaea (Common olive) protein is Profilin-3.